The primary structure comprises 239 residues: MSEQGLREIARDGLWRNNPGLVQLLGLCPLLGTSNSTVNALGLGLATLLVLVCSNAAVSLVRGAVSEAIRLPAFVMIIAALTTCIELLMQAWTYELYQILGIFIPLITTNCVILGRAEAFAAKNGVLRASFDGLLTGLGFALVLLVLGGLRELLGQGTLLADMQLLFGPAAETWKIQIFPHYQGFLLAILPPGAFIMLGLLIALKNRIDESLAERARAQAGDVPASPQRQRVRVTGVIE.

The next 5 helical transmembrane spans lie at 41–61, 71–91, 95–115, 130–150, and 184–204; these read LGLGLATLLVLVCSNAAVSLV, LPAFVMIIAALTTCIELLMQA, ELYQILGIFIPLITTNCVILG, SFDGLLTGLGFALVLLVLGGL, and GFLLAILPPGAFIMLGLLIAL.

This sequence belongs to the NqrDE/RnfAE family. As to quaternary structure, the complex is composed of six subunits: RnfA, RnfB, RnfC, RnfD, RnfE and RnfG.

It localises to the cell inner membrane. Its function is as follows. Part of a membrane-bound complex that couples electron transfer with translocation of ions across the membrane. This chain is Ion-translocating oxidoreductase complex subunit E, found in Pseudomonas paraeruginosa (strain DSM 24068 / PA7) (Pseudomonas aeruginosa (strain PA7)).